Reading from the N-terminus, the 273-residue chain is 2-dehydro-3-deoxyphosphooctonate aldolase (273 aa).

Belongs to the KdsA family.

Its subcellular location is the cytoplasm. The enzyme catalyses D-arabinose 5-phosphate + phosphoenolpyruvate + H2O = 3-deoxy-alpha-D-manno-2-octulosonate-8-phosphate + phosphate. It functions in the pathway carbohydrate biosynthesis; 3-deoxy-D-manno-octulosonate biosynthesis; 3-deoxy-D-manno-octulosonate from D-ribulose 5-phosphate: step 2/3. The protein operates within bacterial outer membrane biogenesis; lipopolysaccharide biosynthesis. The chain is 2-dehydro-3-deoxyphosphooctonate aldolase from Nitratidesulfovibrio vulgaris (strain ATCC 29579 / DSM 644 / CCUG 34227 / NCIMB 8303 / VKM B-1760 / Hildenborough) (Desulfovibrio vulgaris).